The chain runs to 161 residues: Peptidyl-prolyl cis-trans isomerase (161 aa).

A PPIase cyclophilin-type domain is found at 6 to 160 (FFDIKAGDER…KKIIIEDCGE (155 aa)).

It belongs to the cyclophilin-type PPIase family. PPIase A subfamily. As to expression, found mainly in the tegument, gut epithelium, and muscle layers. Also found in the interior of the parasite.

It carries out the reaction [protein]-peptidylproline (omega=180) = [protein]-peptidylproline (omega=0). Binds cyclosporin A (CsA). CsA mediates some of its effects via an inhibitory action on PPIase. PPIases accelerate the folding of proteins. It catalyzes the cis-trans isomerization of proline imidic peptide bonds in oligopeptides. In Schistosoma mansoni (Blood fluke), this protein is Peptidyl-prolyl cis-trans isomerase.